Consider the following 142-residue polypeptide: Large ribosomal subunit protein uL13 (142 aa).

This sequence belongs to the universal ribosomal protein uL13 family. Part of the 50S ribosomal subunit.

In terms of biological role, this protein is one of the early assembly proteins of the 50S ribosomal subunit, although it is not seen to bind rRNA by itself. It is important during the early stages of 50S assembly. The chain is Large ribosomal subunit protein uL13 from Pseudoalteromonas translucida (strain TAC 125).